We begin with the raw amino-acid sequence, 307 residues long: Thymidylate synthase (307 aa).

DUMP contacts are provided by residues R26 and 160–161 (RR). The active-site Nucleophile is the C180. DUMP contacts are provided by residues 209–212 (RSCD), N220, and 250–252 (HIY). (6R)-5,10-methylene-5,6,7,8-tetrahydrofolate is bound at residue D212. Residue A306 coordinates (6R)-5,10-methylene-5,6,7,8-tetrahydrofolate.

It belongs to the thymidylate synthase family. Bacterial-type ThyA subfamily. Homodimer.

Its subcellular location is the cytoplasm. It carries out the reaction dUMP + (6R)-5,10-methylene-5,6,7,8-tetrahydrofolate = 7,8-dihydrofolate + dTMP. Its pathway is pyrimidine metabolism; dTTP biosynthesis. Its function is as follows. Catalyzes the reductive methylation of 2'-deoxyuridine-5'-monophosphate (dUMP) to 2'-deoxythymidine-5'-monophosphate (dTMP) while utilizing 5,10-methylenetetrahydrofolate (mTHF) as the methyl donor and reductant in the reaction, yielding dihydrofolate (DHF) as a by-product. This enzymatic reaction provides an intracellular de novo source of dTMP, an essential precursor for DNA biosynthesis. The chain is Thymidylate synthase from Rhizobium rhizogenes (strain K84 / ATCC BAA-868) (Agrobacterium radiobacter).